The chain runs to 242 residues: Myogenic factor 6 (242 aa).

Residues 31–63 (SPLYPGSDGTLSPCQDQMPPEAGSDSSGEEHVL) are disordered. Residues 93-144 (DRRKAATLRERRRLKKINEAFEALKRRTVANPNQRLPKVEILRSAINYIERL) form the bHLH domain.

As to quaternary structure, efficient DNA binding requires dimerization with another bHLH protein.

The protein localises to the nucleus. In terms of biological role, involved in muscle differentiation (myogenic factor). Induces fibroblasts to differentiate into myoblasts. Probable sequence specific DNA-binding protein. This Sus scrofa (Pig) protein is Myogenic factor 6 (MYF6).